The following is a 439-amino-acid chain: Nuclear hormone receptor family member nhr-97 (439 aa).

Over residues 1–13 (MSGDAQPSSNQRA) the composition is skewed to polar residues. Residues 1 to 22 (MSGDAQPSSNQRATEARPPPSP) form a disordered region. Positions 32 to 108 (GALCVVCGDR…VGMKIEAVKM (77 aa)) form a DNA-binding region, nuclear receptor. NR C4-type zinc fingers lie at residues 35–56 (CVVCGDRACSHLYYGVAACHGC) and 72–96 (CRYGGNCSISTAGRNACRYCRFHRC). The interval 112-135 (LTKRKKEKTDEDDTDDGGSHESFE) is disordered. The NR LBD domain maps to 173–408 (FVQPSLQNLL…GEGLLFWQLY (236 aa)).

The protein belongs to the nuclear hormone receptor family.

Its subcellular location is the nucleus. Functionally, orphan nuclear receptor. In Caenorhabditis elegans, this protein is Nuclear hormone receptor family member nhr-97 (nhr-97).